The chain runs to 284 residues: Homeobox protein Hox-D13 (284 aa).

Positions 217–276 form a DNA-binding region, homeobox; sequence GRKKRVPYTKTQLKELEREYATNKFITKEKRRRISTATNLTERQVTIWFQNRRVKEKKVV.

This sequence belongs to the Abd-B homeobox family.

Its subcellular location is the nucleus. Its function is as follows. Sequence-specific transcription factor that binds gene promoters and activates their transcription. Part of a developmental regulatory system that provides cells with specific positional identities on the anterior-posterior axis. The polypeptide is Homeobox protein Hox-D13 (HOXD13) (Heterodontus francisci (Horn shark)).